A 221-amino-acid polypeptide reads, in one-letter code: Ribose-5-phosphate isomerase A (221 aa).

Substrate-binding positions include 26-29 (TGST), 81-84 (DGAD), and 94-97 (KGGG). The active-site Proton acceptor is the Glu103. Lys121 is a substrate binding site.

It belongs to the ribose 5-phosphate isomerase family. As to quaternary structure, homodimer.

It catalyses the reaction aldehydo-D-ribose 5-phosphate = D-ribulose 5-phosphate. Its pathway is carbohydrate degradation; pentose phosphate pathway; D-ribose 5-phosphate from D-ribulose 5-phosphate (non-oxidative stage): step 1/1. Functionally, catalyzes the reversible conversion of ribose-5-phosphate to ribulose 5-phosphate. This chain is Ribose-5-phosphate isomerase A, found in Bacillus mycoides (strain KBAB4) (Bacillus weihenstephanensis).